The chain runs to 273 residues: Protein BMH2 (273 aa).

Residue Ser-2 is modified to N-acetylserine. A disordered region spans residues 236–273; it reads DISESGQEDQQQQQQQQQQQQQQQQQAPAEQTQGEPTK. The span at 245–261 shows a compositional bias: low complexity; it reads QQQQQQQQQQQQQQQQQ. The segment covering 262 to 273 has biased composition (polar residues); sequence APAEQTQGEPTK.

The protein belongs to the 14-3-3 family. In terms of assembly, interacts with NTH1 (via N-terminus when phosphorylated by PKA); the interaction is direct and activates NTH1. Interacts with FIN1.

The protein resides in the cytoplasm. It localises to the nucleus. The chain is Protein BMH2 (BMH2) from Saccharomyces cerevisiae (strain ATCC 204508 / S288c) (Baker's yeast).